The sequence spans 198 residues: Recombination protein RecR (198 aa).

Residues Cys-58–Cys-73 form a C4-type zinc finger. Residues Ser-81–Pro-175 enclose the Toprim domain.

It belongs to the RecR family.

May play a role in DNA repair. It seems to be involved in an RecBC-independent recombinational process of DNA repair. It may act with RecF and RecO. This Clostridium acetobutylicum (strain ATCC 824 / DSM 792 / JCM 1419 / IAM 19013 / LMG 5710 / NBRC 13948 / NRRL B-527 / VKM B-1787 / 2291 / W) protein is Recombination protein RecR.